A 323-amino-acid polypeptide reads, in one-letter code: MQTTWQPTASMEQLRQRAALITAIRQFFAERQVMEVDTPAMSHATVTDIHLHTFQTEFVGPGYADGSKLFFMTSPEFHMKRLLAAGSGCIYQINKAFRNEENGRHHNPEFTMLEWYRIGFDHHKLMDEMDDLLQLVLKCGAAERMTYQQAFIDVLGVCPLEGSMQELKVVAAKLGLSDIAEPEEDRDTLLQLLSSIGVEAKIGQQVPAFVYDFPASQAALAKINPQDIRVADRFEVYFKGIELANGFHELDNPKEQLARFEQDNAKRLDMGLKPQPIDYHLIGALEAGLPDCAGVALGVDRLIMLALGCDHIDQVTAFPFPIA.

74–76 (SPE) is a substrate binding site. ATP contacts are provided by residues 98 to 100 (RNE) and Asn-107. Residue Tyr-116 participates in substrate binding. 242–243 (EL) contributes to the ATP binding site. Residue Glu-249 participates in substrate binding. Gly-298 lines the ATP pocket.

This sequence belongs to the class-II aminoacyl-tRNA synthetase family. EpmA subfamily. As to quaternary structure, homodimer.

The catalysed reaction is D-beta-lysine + L-lysyl-[protein] + ATP = N(6)-((3R)-3,6-diaminohexanoyl)-L-lysyl-[protein] + AMP + diphosphate + H(+). Its function is as follows. With EpmB is involved in the beta-lysylation step of the post-translational modification of translation elongation factor P (EF-P). Catalyzes the ATP-dependent activation of (R)-beta-lysine produced by EpmB, forming a lysyl-adenylate, from which the beta-lysyl moiety is then transferred to the epsilon-amino group of a conserved specific lysine residue in EF-P. This Vibrio campbellii (strain ATCC BAA-1116) protein is Elongation factor P--(R)-beta-lysine ligase.